The sequence spans 382 residues: Mannitol-1-phosphate 5-dehydrogenase (382 aa).

3-14 lines the NAD(+) pocket; sequence ALHFGAGNIGRG. Lys-269 is subject to N6-acetyllysine.

Belongs to the mannitol dehydrogenase family.

It carries out the reaction D-mannitol 1-phosphate + NAD(+) = beta-D-fructose 6-phosphate + NADH + H(+). This chain is Mannitol-1-phosphate 5-dehydrogenase, found in Shigella boydii serotype 18 (strain CDC 3083-94 / BS512).